Here is a 666-residue protein sequence, read N- to C-terminus: uncharacterized protein (666 aa).

This is an uncharacterized protein from Invertebrate iridescent virus 6 (IIV-6).